Here is a 746-residue protein sequence, read N- to C-terminus: Polyribonucleotide nucleotidyltransferase (746 aa).

Residues Asp-515 and Asp-521 each contribute to the Mg(2+) site. The region spanning 581–640 (PRVIAVKIPVDKIGEVIGPKGKMINQIQEDTGADISIEDDGTVYIGATNGPSADAARSAI) is the KH domain. In terms of domain architecture, S1 motif spans 652–724 (GERYLGTVVK…DRGKLSLSPV (73 aa)).

Belongs to the polyribonucleotide nucleotidyltransferase family. The cofactor is Mg(2+).

It is found in the cytoplasm. The enzyme catalyses RNA(n+1) + phosphate = RNA(n) + a ribonucleoside 5'-diphosphate. Involved in mRNA degradation. Catalyzes the phosphorolysis of single-stranded polyribonucleotides processively in the 3'- to 5'-direction. The sequence is that of Polyribonucleotide nucleotidyltransferase from Renibacterium salmoninarum (strain ATCC 33209 / DSM 20767 / JCM 11484 / NBRC 15589 / NCIMB 2235).